The chain runs to 621 residues: Uptake hydrogenase large subunit (621 aa).

Residues Cys75, Cys78, Cys600, and Cys603 each coordinate Ni(2+).

Belongs to the [NiFe]/[NiFeSe] hydrogenase large subunit family. As to quaternary structure, heterodimer of a large and a small subunit. Ni(2+) serves as cofactor.

Its subcellular location is the cell membrane. It carries out the reaction H2 + A = AH2. Its function is as follows. This enzyme recycles the H(2) produced by nitrogenase to increase the production of ATP and to protect nitrogenase against inhibition or damage by O(2) under carbon- or phosphate-limited conditions. The protein is Uptake hydrogenase large subunit (hupL) of Alcaligenes hydrogenophilus.